Reading from the N-terminus, the 295-residue chain is 4-diphosphocytidyl-2-C-methyl-D-erythritol kinase (295 aa).

K22 is a catalytic residue. An ATP-binding site is contributed by 106–116; the sequence is PAGGGFGGGSS. Residue D148 is part of the active site.

Belongs to the GHMP kinase family. IspE subfamily.

It catalyses the reaction 4-CDP-2-C-methyl-D-erythritol + ATP = 4-CDP-2-C-methyl-D-erythritol 2-phosphate + ADP + H(+). The protein operates within isoprenoid biosynthesis; isopentenyl diphosphate biosynthesis via DXP pathway; isopentenyl diphosphate from 1-deoxy-D-xylulose 5-phosphate: step 3/6. Its function is as follows. Catalyzes the phosphorylation of the position 2 hydroxy group of 4-diphosphocytidyl-2C-methyl-D-erythritol. The chain is 4-diphosphocytidyl-2-C-methyl-D-erythritol kinase from Xanthomonas campestris pv. campestris (strain 8004).